A 428-amino-acid chain; its full sequence is Phosphoglucosamine mutase (428 aa).

Ser-96 acts as the Phosphoserine intermediate in catalysis. The Mg(2+) site is built by Ser-96, Asp-229, Asp-231, and Asp-233. Residue Ser-96 is modified to Phosphoserine.

This sequence belongs to the phosphohexose mutase family. Mg(2+) serves as cofactor. Post-translationally, activated by phosphorylation.

It carries out the reaction alpha-D-glucosamine 1-phosphate = D-glucosamine 6-phosphate. Its function is as follows. Catalyzes the conversion of glucosamine-6-phosphate to glucosamine-1-phosphate. The polypeptide is Phosphoglucosamine mutase (Thermotoga neapolitana (strain ATCC 49049 / DSM 4359 / NBRC 107923 / NS-E)).